A 251-amino-acid polypeptide reads, in one-letter code: Ubiquinone/menaquinone biosynthesis C-methyltransferase UbiE (251 aa).

S-adenosyl-L-methionine contacts are provided by residues Thr74, Asp95, 123-124, and Ser140; that span reads NA.

It belongs to the class I-like SAM-binding methyltransferase superfamily. MenG/UbiE family.

It catalyses the reaction a 2-demethylmenaquinol + S-adenosyl-L-methionine = a menaquinol + S-adenosyl-L-homocysteine + H(+). The enzyme catalyses a 2-methoxy-6-(all-trans-polyprenyl)benzene-1,4-diol + S-adenosyl-L-methionine = a 5-methoxy-2-methyl-3-(all-trans-polyprenyl)benzene-1,4-diol + S-adenosyl-L-homocysteine + H(+). The protein operates within quinol/quinone metabolism; menaquinone biosynthesis; menaquinol from 1,4-dihydroxy-2-naphthoate: step 2/2. It participates in cofactor biosynthesis; ubiquinone biosynthesis. Its function is as follows. Methyltransferase required for the conversion of demethylmenaquinol (DMKH2) to menaquinol (MKH2) and the conversion of 2-polyprenyl-6-methoxy-1,4-benzoquinol (DDMQH2) to 2-polyprenyl-3-methyl-6-methoxy-1,4-benzoquinol (DMQH2). This Enterobacter sp. (strain 638) protein is Ubiquinone/menaquinone biosynthesis C-methyltransferase UbiE.